A 393-amino-acid polypeptide reads, in one-letter code: Putative serpin-Z6A (393 aa).

The interval glycine 336 to arginine 360 is RCL.

Belongs to the serpin family.

Its function is as follows. Probable serine protease inhibitor. The protein is Putative serpin-Z6A of Oryza sativa subsp. japonica (Rice).